Here is a 255-residue protein sequence, read N- to C-terminus: 1-acyl-sn-glycerol-3-phosphate acyltransferase (255 aa).

The HXXXXD motif motif lies at 78–83; sequence HVSWLD.

The protein belongs to the 1-acyl-sn-glycerol-3-phosphate acyltransferase family.

The protein localises to the cell inner membrane. The catalysed reaction is a 1-acyl-sn-glycero-3-phosphate + an acyl-CoA = a 1,2-diacyl-sn-glycero-3-phosphate + CoA. The protein operates within phospholipid metabolism; CDP-diacylglycerol biosynthesis; CDP-diacylglycerol from sn-glycerol 3-phosphate: step 2/3. Converts lysophosphatidic acid (LPA) into phosphatidic acid by incorporating acyl moiety at the 2 position. The protein is 1-acyl-sn-glycerol-3-phosphate acyltransferase (plsC) of Neisseria gonorrhoeae.